Reading from the N-terminus, the 139-residue chain is Ribulose bisphosphate carboxylase small subunit (139 aa).

This sequence belongs to the RuBisCO small chain family. As to quaternary structure, heterohexadecamer of 8 large and 8 small subunits.

It is found in the plastid. Its subcellular location is the chloroplast. Its function is as follows. RuBisCO catalyzes two reactions: the carboxylation of D-ribulose 1,5-bisphosphate, the primary event in carbon dioxide fixation, as well as the oxidative fragmentation of the pentose substrate in the photorespiration process. Both reactions occur simultaneously and in competition at the same active site. Although the small subunit is not catalytic it is essential for maximal activity. This is Ribulose bisphosphate carboxylase small subunit from Pylaiella littoralis (Seaweed).